The chain runs to 364 residues: N-acetyl-gamma-glutamyl-phosphate reductase (364 aa).

The active site involves C157.

It belongs to the NAGSA dehydrogenase family. Type 1 subfamily.

The protein resides in the cytoplasm. The enzyme catalyses N-acetyl-L-glutamate 5-semialdehyde + phosphate + NADP(+) = N-acetyl-L-glutamyl 5-phosphate + NADPH + H(+). The protein operates within amino-acid biosynthesis; L-arginine biosynthesis; N(2)-acetyl-L-ornithine from L-glutamate: step 3/4. Functionally, catalyzes the NADPH-dependent reduction of N-acetyl-5-glutamyl phosphate to yield N-acetyl-L-glutamate 5-semialdehyde. The protein is N-acetyl-gamma-glutamyl-phosphate reductase of Bifidobacterium animalis subsp. lactis (strain AD011).